The sequence spans 215 residues: Large ribosomal subunit protein bL25 (215 aa).

The tract at residues 174–215 is disordered; sequence ETVVTVQPPATEKEEETEAAVTDSEPEVINEKEEPAEEAKEE. The span at 186 to 215 shows a compositional bias: acidic residues; sequence KEEETEAAVTDSEPEVINEKEEPAEEAKEE.

Belongs to the bacterial ribosomal protein bL25 family. CTC subfamily. As to quaternary structure, part of the 50S ribosomal subunit; part of the 5S rRNA/L5/L18/L25 subcomplex. Contacts the 5S rRNA. Binds to the 5S rRNA independently of L5 and L18.

Its function is as follows. This is one of the proteins that binds to the 5S RNA in the ribosome where it forms part of the central protuberance. This chain is Large ribosomal subunit protein bL25, found in Halalkalibacterium halodurans (strain ATCC BAA-125 / DSM 18197 / FERM 7344 / JCM 9153 / C-125) (Bacillus halodurans).